Consider the following 232-residue polypeptide: Enolase-phosphatase E1 (232 aa).

This sequence belongs to the HAD-like hydrolase superfamily. MasA/MtnC family. Monomer. It depends on Mg(2+) as a cofactor.

The catalysed reaction is 5-methylsulfanyl-2,3-dioxopentyl phosphate + H2O = 1,2-dihydroxy-5-(methylsulfanyl)pent-1-en-3-one + phosphate. It participates in amino-acid biosynthesis; L-methionine biosynthesis via salvage pathway; L-methionine from S-methyl-5-thio-alpha-D-ribose 1-phosphate: step 3/6. It functions in the pathway amino-acid biosynthesis; L-methionine biosynthesis via salvage pathway; L-methionine from S-methyl-5-thio-alpha-D-ribose 1-phosphate: step 4/6. Bifunctional enzyme that catalyzes the enolization of 2,3-diketo-5-methylthiopentyl-1-phosphate (DK-MTP-1-P) into the intermediate 2-hydroxy-3-keto-5-methylthiopentenyl-1-phosphate (HK-MTPenyl-1-P), which is then dephosphorylated to form the acireductone 1,2-dihydroxy-3-keto-5-methylthiopentene (DHK-MTPene). This is Enolase-phosphatase E1 from Xanthomonas euvesicatoria pv. vesicatoria (strain 85-10) (Xanthomonas campestris pv. vesicatoria).